The chain runs to 156 residues: Transcription elongation factor GreA (156 aa).

Residues 2 to 27 (EKTFPMTKEGLDKLKAELENLKLVKR) are a coiled coil.

The protein belongs to the GreA/GreB family.

Its function is as follows. Necessary for efficient RNA polymerase transcription elongation past template-encoded arresting sites. The arresting sites in DNA have the property of trapping a certain fraction of elongating RNA polymerases that pass through, resulting in locked ternary complexes. Cleavage of the nascent transcript by cleavage factors such as GreA or GreB allows the resumption of elongation from the new 3'terminus. GreA releases sequences of 2 to 3 nucleotides. The chain is Transcription elongation factor GreA from Lactococcus lactis subsp. cremoris (strain SK11).